We begin with the raw amino-acid sequence, 26 residues long: Coenzyme PQQ synthesis protein A (26 aa).

The pyrroloquinoline quinone (Glu-Tyr) cross-link spans 16–20 (EINSY).

The protein belongs to the PqqA family.

Its pathway is cofactor biosynthesis; pyrroloquinoline quinone biosynthesis. Functionally, required for coenzyme pyrroloquinoline quinone (PQQ) biosynthesis. PQQ is probably formed by cross-linking a specific glutamate to a specific tyrosine residue and excising these residues from the peptide. The polypeptide is Coenzyme PQQ synthesis protein A (Gluconacetobacter diazotrophicus (strain ATCC 49037 / DSM 5601 / CCUG 37298 / CIP 103539 / LMG 7603 / PAl5)).